A 1978-amino-acid chain; its full sequence is Protein MOR1 (1978 aa).

HEAT repeat units follow at residues 48 to 86 (DPRL…AADS) and 165 to 202 (IPPK…WIGK). Residues 230–264 (AGAKPTRKIRSEQDKEPEAEASSDVVGDGPSEEAV) are disordered. Over residues 238–247 (IRSEQDKEPE) the composition is skewed to basic and acidic residues. HEAT repeat units lie at residues 322–359 (GDFS…GLRT), 363–400 (ASSR…AGCL), and 442–479 (KAHK…SVGM). A disordered region spans residues 501–587 (IAGSGGGDQA…SVEPPEDVEP (87 aa)). Positions 510–527 (AGTSSVTVQSSVGSTATG) are enriched in low complexity. Residues 565-577 (GKKDGSVRNEGSK) are compositionally biased toward basic and acidic residues. 4 HEAT repeats span residues 849 to 886 (DIST…EANK), 890 to 928 (PTGT…AMGP), 932 to 969 (KASK…AVHL), and 1008 to 1045 (VDAI…VSGQ). The tract at residues 1087–1115 (SKGVTKISKSTSNGTLKQGNRSRAVPTKG) is disordered. The segment covering 1093 to 1107 (ISKSTSNGTLKQGNR) has biased composition (polar residues). 4 HEAT repeats span residues 1230–1253 (LKVL…MTEA), 1254–1286 (EAAI…QIIQ), 1287–1325 (AYSV…TCGT), and 1328–1365 (GGLL…ILGA). Positions 1393 to 1403 (MEKRREGKPGE) are enriched in basic and acidic residues. Positions 1393–1431 (MEKRREGKPGEARAALRRSVRDSGPEVAEQSGDISQTVP) are disordered. The stretch at 1535–1575 (RSCKYVLNTLMQTFQNKKLAHAVKEGTLESLITELLLWLLD) is one HEAT 14 repeat. The tract at residues 1837-1862 (AAAGRTPSSLPLSTPPPSSLALPSPD) is disordered.

Belongs to the TOG/XMAP215 family. In terms of tissue distribution, expressed in roots, cotyledons, rosette leaves, stems, open flowers and green siliques.

It is found in the cytoplasm. The protein resides in the cytoskeleton. Its subcellular location is the phragmoplast. The protein localises to the spindle. Microtubule-binding protein that is essential for cortical microtubules organization and function. Essential for maintaining the interphase cortical array and for correct morphogenesis. Promotes rapid growth and shrinkage of microtubules and suppresses the pausing of interphase microtubules. Regulates the structure and function of microtubule arrays during mitosis and cytokinesis. Probably not required for cellulose microfibrils alignment in roots. The chain is Protein MOR1 (MOR1) from Arabidopsis thaliana (Mouse-ear cress).